The chain runs to 868 residues: Transcription factor pynR (868 aa).

The segment at residues 11–37 (CTFCRTRKIACSGERICNACRSRSIEC) is a DNA-binding region (zn(2)-C6 fungal-type). 4 disordered regions span residues 51–88 (NKTTSTRASISAGPAGPSPITLEDGEPGDGGHSITSAV), 662–683 (LSGSRDQGSRSSSSSVSSLDLS), 715–761 (SGIP…ASDL), and 829–868 (GMGERGQKRSSEKLGGLSEGDTPGTSADGGTKRRMKGMSN). 2 stretches are compositionally biased toward low complexity: residues 663 to 683 (SGSRDQGSRSSSSSVSSLDLS) and 715 to 727 (SGIPSSISSSISH).

The protein resides in the nucleus. Its function is as follows. Transcription factor that regulates the expression of the gene cluster that mediates the biosynthesis of pyranonigrins, a family of antioxidative compounds. This Aspergillus niger (strain ATCC MYA-4892 / CBS 513.88 / FGSC A1513) protein is Transcription factor pynR.